The sequence spans 391 residues: E3 ubiquitin-protein ligase RMND5A (391 aa).

N-acetylmethionine is present on M1. One can recognise a LisH domain in the interval 114–146 (SQRLLNEVMVEHFFRQGMLDVAEELCQESGLSV). One can recognise a CTLH domain in the interval 153-210 (PFVELNRILEALKVRVLRPALEWAVSNREMLIAQNSSLEFKLHRLYFISLLMGGTTNQ). The RING-Gid-type zinc-finger motif lies at 336 to 377 (CPILRQQTTDNNPPMKLVCGHIISRDALNKMFNGSKLKCPYC).

As to quaternary structure, identified in the CTLH complex that contains GID4, RANBP9 and/or RANBP10, MKLN1, MAEA, RMND5A (or alternatively its paralog RMND5B), GID8, ARMC8, WDR26 and YPEL5. Within this complex, MAEA, RMND5A (or alternatively its paralog RMND5B), GID8, WDR26, and RANBP9 and/or RANBP10 form the catalytic core, while GID4, MKLN1, ARMC8 and YPEL5 have ancillary roles.

The protein localises to the nucleus. The protein resides in the nucleoplasm. It is found in the cytoplasm. The catalysed reaction is S-ubiquitinyl-[E2 ubiquitin-conjugating enzyme]-L-cysteine + [acceptor protein]-L-lysine = [E2 ubiquitin-conjugating enzyme]-L-cysteine + N(6)-ubiquitinyl-[acceptor protein]-L-lysine.. Functionally, core component of the CTLH E3 ubiquitin-protein ligase complex that selectively accepts ubiquitin from UBE2H and mediates ubiquitination and subsequent proteasomal degradation of the transcription factor HBP1. MAEA and RMND5A are both required for catalytic activity of the CTLH E3 ubiquitin-protein ligase complex. Catalytic activity of the complex is required for normal cell proliferation. The CTLH E3 ubiquitin-protein ligase complex is not required for the degradation of enzymes involved in gluconeogenesis, such as FBP1. This Mus musculus (Mouse) protein is E3 ubiquitin-protein ligase RMND5A (Rmnd5a).